The sequence spans 81 residues: MKTLLLTLLVVTIVCLDLASTMICYSHKTPQPSATITCEEKTCYKKSVRKLPAIVAGRGCGCPSKEMLVAIHCCRSDKCNE.

A signal peptide spans 1–21 (MKTLLLTLLVVTIVCLDLAST). Disulfide bonds link Cys-24-Cys-43, Cys-38-Cys-60, Cys-62-Cys-73, and Cys-74-Cys-79.

It belongs to the three-finger toxin family. Short-chain subfamily. Orphan group XI sub-subfamily. Expressed by the venom gland.

It localises to the secreted. Its function is as follows. Is cytotoxic against A549 cells (LC(50)=106 ug/ml). This is Toxin F-VIII from Dendroaspis angusticeps (Eastern green mamba).